The sequence spans 284 residues: L-ribulose-5-phosphate 3-epimerase UlaE (284 aa).

This sequence belongs to the L-ribulose-5-phosphate 3-epimerase family.

The enzyme catalyses L-ribulose 5-phosphate = L-xylulose 5-phosphate. Its pathway is cofactor degradation; L-ascorbate degradation; D-xylulose 5-phosphate from L-ascorbate: step 3/4. Its function is as follows. Catalyzes the isomerization of L-xylulose-5-phosphate to L-ribulose-5-phosphate. Is involved in the anaerobic L-ascorbate utilization. The sequence is that of L-ribulose-5-phosphate 3-epimerase UlaE from Salmonella typhi.